Consider the following 1343-residue polypeptide: Kinesin-like protein KIF7 (1343 aa).

Residues 15–349 (PVRVALRVRP…LNYASRAQNI (335 aa)) enclose the Kinesin motor domain. 94-101 (GQTGSGKT) contributes to the ATP binding site. Disordered stretches follow at residues 356–382 (NWRP…RSET), 451–483 (RSAL…RKED), and 611–639 (EVNR…TLHL). Residues 358–479 (RPEAERPPEE…EDQAAQGAGG (122 aa)) are interaction with DLG5. The tract at residues 358 to 1206 (RPEAERPPEE…LGRYMWINQE (849 aa)) is interaction with SMO. The stretch at 480–542 (RKEDEGAQQL…ELRLRLELVR (63 aa)) forms a coiled coil. Positions 513-775 (AMEQYKLQSD…LRELEGKELQ (263 aa)) are sufficient for interaction with NPHP1. Coiled coils occupy residues 698 to 1057 (ASEW…AAIE) and 1109 to 1211 (TLRE…KQKL). Phosphoserine is present on Ser-898. Disordered regions lie at residues 1219-1238 (HSRG…APGN) and 1310-1343 (GEAG…KNPL).

Belongs to the TRAFAC class myosin-kinesin ATPase superfamily. Kinesin family. KIF27 subfamily. Can form homodimers and interacts with microtubules. Interacts with GLI1, GLI2, GLI3, SMO and SUFU. Interacts with NPHP1. Interacts with SMO and DLG5 (via PDZ4 or guanylate kinase-like domain). Post-translationally, polyubiquitinated by UBR3. Embryonic stem cells, melanotic melanoma and Jurkat T-cells. Expressed in heart, lung, liver, kidney, testis, retina, placenta, pancreas, colon, small intestin, prostate and thymus.

It localises to the cell projection. The protein resides in the cilium. The protein localises to the cytoplasm. It is found in the cytoskeleton. Its subcellular location is the cilium basal body. In terms of biological role, essential for hedgehog signaling regulation: acts both as a negative and positive regulator of sonic hedgehog (Shh) and Indian hedgehog (Ihh) pathways, acting downstream of SMO, through both SUFU-dependent and -independent mechanisms. Involved in the regulation of microtubular dynamics. Required for proper organization of the ciliary tip and control of ciliary localization of SUFU-GLI2 complexes. Required for localization of GLI3 to cilia in response to Shh. Negatively regulates Shh signaling by preventing inappropriate activation of the transcriptional activator GLI2 in the absence of ligand. Positively regulates Shh signaling by preventing the processing of the transcription factor GLI3 into its repressor form. In keratinocytes, promotes the dissociation of SUFU-GLI2 complexes, GLI2 nuclear translocation and Shh signaling activation. Involved in the regulation of epidermal differentiation and chondrocyte development. The polypeptide is Kinesin-like protein KIF7 (KIF7) (Homo sapiens (Human)).